The chain runs to 175 residues: uncharacterized protein (175 aa).

A compositionally biased stretch (low complexity) spans 35–56; the sequence is LIENSNYDNNNINNNNNNNNTD. The tract at residues 35 to 70 is disordered; it reads LIENSNYDNNNINNNNNNNNTDNDNDNNNDNEPFYN. Transmembrane regions (helical) follow at residues 106-126 and 132-152; these read ILSFSIKSFLLLILYILFFNY and YFIILLSLNLIITLISIKSIF.

The protein resides in the membrane. This is an uncharacterized protein from Dictyostelium discoideum (Social amoeba).